A 221-amino-acid chain; its full sequence is Adenylate kinase (221 aa).

10 to 15 (GAGKGT) contributes to the ATP binding site. The NMP stretch occupies residues 30-59 (STGDMLRAAVKAGTEFGVAAKKIMDAGGLV). AMP contacts are provided by residues Thr31, Arg36, 57 to 59 (GLV), 85 to 88 (GFPR), and Gln92. The interval 122-159 (GRRVHPASGRTYHIKYNPPKVEGKDDVTGDALIQRDDD) is LID. ATP is bound by residues Arg123 and 132 to 133 (TY). The AMP site is built by Arg156 and Arg167. Gly207 lines the ATP pocket.

The protein belongs to the adenylate kinase family. In terms of assembly, monomer.

The protein resides in the cytoplasm. The enzyme catalyses AMP + ATP = 2 ADP. The protein operates within purine metabolism; AMP biosynthesis via salvage pathway; AMP from ADP: step 1/1. Its function is as follows. Catalyzes the reversible transfer of the terminal phosphate group between ATP and AMP. Plays an important role in cellular energy homeostasis and in adenine nucleotide metabolism. This Polynucleobacter asymbioticus (strain DSM 18221 / CIP 109841 / QLW-P1DMWA-1) (Polynucleobacter necessarius subsp. asymbioticus) protein is Adenylate kinase.